Consider the following 251-residue polypeptide: UDP-Glc:alpha-D-GlcNAc-diphosphoundecaprenol beta-1,3-glucosyltransferase WfaP (251 aa).

The protein belongs to the glycosyltransferase 2 family. It depends on Mn(2+) as a cofactor. Requires Mg(2+) as cofactor.

It localises to the cell inner membrane. The enzyme catalyses N-acetyl-alpha-D-glucosaminyl-di-trans,octa-cis-undecaprenyl diphosphate + UDP-alpha-D-glucose = beta-D-Glc-(1-&gt;3)-alpha-D-GlcNAc-di-trans,octa-cis-undecaprenyl diphosphate + UDP + H(+). The protein operates within bacterial outer membrane biogenesis; lipopolysaccharide biosynthesis. In terms of biological role, catalyzes the addition of Glc, the second sugar moiety of the O56-antigen repeating unit, to GlcNAc-pyrophosphate-undecaprenol. In Escherichia coli, this protein is UDP-Glc:alpha-D-GlcNAc-diphosphoundecaprenol beta-1,3-glucosyltransferase WfaP (wfaP).